The primary structure comprises 415 residues: Phosphoribosylamine--glycine ligase (415 aa).

The ATP-grasp domain occupies 108–311 (KKIMEKYNIP…LMQHIIDLDE (204 aa)). 134–191 (IENCELPVVVKKDGLAAGKGVIIADTIEAARSAIEIMYGDEEEGTVVFETFLEGEEFS) serves as a coordination point for ATP. Residues E281 and N283 each coordinate Mg(2+).

This sequence belongs to the GARS family. Mg(2+) is required as a cofactor. The cofactor is Mn(2+).

The catalysed reaction is 5-phospho-beta-D-ribosylamine + glycine + ATP = N(1)-(5-phospho-beta-D-ribosyl)glycinamide + ADP + phosphate + H(+). Its pathway is purine metabolism; IMP biosynthesis via de novo pathway; N(1)-(5-phospho-D-ribosyl)glycinamide from 5-phospho-alpha-D-ribose 1-diphosphate: step 2/2. The protein is Phosphoribosylamine--glycine ligase of Staphylococcus aureus (strain COL).